A 626-amino-acid polypeptide reads, in one-letter code: MADEGKSYSEHDDERVNFPQRKKKGRGPFRWKYGEGNRRSGRGGSGIRSSRLEEDDGDVAMSDAQDGPRVRYNPYTTRPNRRGDAWHDRDRIHVTVRRDRAPPERGGAGTSQDGTSKNWFKITIPYGRKYDKAWLLSMIQSKCSVPFTPIEFHYENTRAQFFVEDASTASALKAVNYKILDRENRRISIIINPSAPPHTILNELKPEQVEQLKLIMSKRYDGSQQALDLKGLRSDPDLVSQNIDVVLNRRSCMAATLRVIEENIPELLSLNLSHNRLYRLDDMSSIVQKVPNLKILNLSGNELKSERELDKIKGLKLEELWLDGNSLCDTFRDQSTYIRSVVACVSAIRERFPKLLRLDGHELPPPIAFDVEAPTTLPPCKGSYFGTENLKSLVLHFLQQYYAIYDSGDRQGLLDAYHDGACCSLSIPFIPQNPARSSLAEYFKDSRNVKKLKDPTLRFRLLKHTRLNVVAFLNELPKTQHDVNSFVVDISAQTSTLPCFSVNGVFKEVDGKSRDSLRAFTRTFIAVPASNSGLCIVNDELFVRNASSEEIQRAFAMPAPTPSSSPVPTLSPEQQEMLQAFSTQSGMNLEWSQKCLQDNNWDYTRSAQAFTHLKAKGEIPEVAFMK.

Over residues 1 to 16 the composition is skewed to basic and acidic residues; the sequence is MADEGKSYSEHDDERV. The segment at 1 to 85 is disordered; sequence MADEGKSYSE…TTRPNRRGDA (85 aa). Residue Ala2 is modified to N-acetylalanine. Residues 2-60 are minor non-specific RNA-binding; that stretch reads ADEGKSYSEHDDERVNFPQRKKKGRGPFRWKYGEGNRRSGRGGSGIRSSRLEEDDGDVA. Residues 2–118 form an RNA-binding (RBD) region; that stretch reads ADEGKSYSEH…GTSQDGTSKN (117 aa). An interaction with ALYREF/THOC4 and LUZP4 region spans residues 2-198; sequence ADEGKSYSEH…IIINPSAPPH (197 aa). A Phosphoserine modification is found at Ser9. Positions 20–29 are enriched in basic residues; the sequence is QRKKKGRGPF. Asymmetric dimethylarginine; alternate is present on Arg42. Residue Arg42 is modified to Omega-N-methylarginine; alternate. The tract at residues 61-118 is major non-specific RNA-binding; that stretch reads MSDAQDGPRVRYNPYTTRPNRRGDAWHDRDRIHVTVRRDRAPPERGGAGTSQDGTSKN. Residues 61-118 are RNA binding; the sequence is MSDAQDGPRVRYNPYTTRPNRRGDAWHDRDRIHVTVRRDRAPPERGGAGTSQDGTSKN. The Nuclear localization signal motif lies at 67-100; the sequence is GPRVRYNPYTTRPNRRGDAWHDRDRIHVTVRRDR. A Nuclear export signal motif is present at residues 83–110; the sequence is GDAWHDRDRIHVTVRRDRAPPERGGAGT. An RRM domain is found at 119 to 198; it reads WFKITIPYGR…IIINPSAPPH (80 aa). Tyr126 is subject to 3'-nitrotyrosine. LRR repeat units follow at residues 266-291, 292-315, 316-350, and 351-378; these read ELLS…QKVP, NLKI…IKGL, KLEE…AIRE, and RFPK…TTLP. An NTF2 domain is found at 393–543; sequence LVLHFLQQYY…LCIVNDELFV (151 aa). The 55-residue stretch at 572–626 folds into the TAP-C domain; the sequence is PEQQEMLQAFSTQSGMNLEWSQKCLQDNNWDYTRSAQAFTHLKAKGEIPEVAFMK.

The protein belongs to the NXF family. Heterodimer (via NTF2 domain) with NXT1. The formation of NXF1-NXT1 heterodimers is required for the NXF1-mediated nuclear mRNA export. Forms a complex with RANBP2/NUP358, NXT1 and RANGAP1. Associates with the exon junction complex (EJC) and with the transcription/export (TREX) complex. Found in a mRNA complex with UPF3A and UPF3B. Found in a post-splicing complex with RBM8A, UPF1, UPF2, UPF3A, UPF3B and RNPS1. Interacts (via N-terminus) with DHX9 (via N-terminus); this interaction is direct and negatively regulates NXF1-mediated nuclear export of constitutive transport element (CTE)-containing cellular mRNAs. Interacts with ALYREF/THOC4. Interacts with FYTTD1/UIF. Interacts with EIF4A3. Interacts with NUPL2. Interacts with THOC5. Interacts with CHTOP. Interacts with FRG1 (via N-terminus). Interacts with LUZP4. Interacts with FMR1; the interaction occurs in a mRNA-dependent and polyribosomes-independent manner in the nucleus. Interacts with CPSF6 (via N-terminus); this interaction is direct. Interacts with RBM15. Interacts with RBM15B. Interacts with MCM3AP; this interaction is not mediated by RNA.

It localises to the nucleus. Its subcellular location is the nucleoplasm. The protein resides in the nucleus speckle. The protein localises to the cytoplasm. In terms of biological role, involved in the nuclear export of mRNA species bearing retroviral constitutive transport elements (CTE) and in the export of mRNA from the nucleus to the cytoplasm (TAP/NFX1 pathway). The NXF1-NXT1 heterodimer is involved in the export of HSP70 mRNA in conjunction with ALYREF/THOC4 and THOC5 components of the TREX complex. ALYREF/THOC4-bound mRNA is thought to be transferred to the NXF1-NXT1 heterodimer for export. Also involved in nuclear export of m6A-containing mRNAs: interaction between SRSF3 and YTHDC1 facilitates m6A-containing mRNA-binding to both SRSF3 and NXF1, promoting mRNA nuclear export. This is Nuclear RNA export factor 1 (NXF1) from Pongo abelii (Sumatran orangutan).